A 180-amino-acid chain; its full sequence is Large ribosomal subunit protein uL5 (180 aa).

Belongs to the universal ribosomal protein uL5 family. In terms of assembly, part of the 50S ribosomal subunit; part of the 5S rRNA/L5/L18/L25 subcomplex. Contacts the 5S rRNA and the P site tRNA. Forms a bridge to the 30S subunit in the 70S ribosome.

Functionally, this is one of the proteins that bind and probably mediate the attachment of the 5S RNA into the large ribosomal subunit, where it forms part of the central protuberance. In the 70S ribosome it contacts protein S13 of the 30S subunit (bridge B1b), connecting the 2 subunits; this bridge is implicated in subunit movement. Contacts the P site tRNA; the 5S rRNA and some of its associated proteins might help stabilize positioning of ribosome-bound tRNAs. The polypeptide is Large ribosomal subunit protein uL5 (Oenococcus oeni (strain ATCC BAA-331 / PSU-1)).